The primary structure comprises 242 residues: Large ribosomal subunit protein uL1 (242 aa).

This sequence belongs to the universal ribosomal protein uL1 family. As to quaternary structure, part of the 50S ribosomal subunit.

Functionally, binds directly to 23S rRNA. The L1 stalk is quite mobile in the ribosome, and is involved in E site tRNA release. In terms of biological role, protein L1 is also a translational repressor protein, it controls the translation of the L11 operon by binding to its mRNA. The sequence is that of Large ribosomal subunit protein uL1 from Streptomyces virginiae (Streptomyces cinnamonensis).